A 95-amino-acid chain; its full sequence is Citrate lyase acyl carrier protein (95 aa).

Residue Ser-14 is modified to O-(phosphoribosyl dephospho-coenzyme A)serine.

This sequence belongs to the CitD family. In terms of assembly, oligomer with a subunit composition of (alpha,beta,gamma)6.

The protein resides in the cytoplasm. Its function is as follows. Covalent carrier of the coenzyme of citrate lyase. In Haemophilus ducreyi (strain 35000HP / ATCC 700724), this protein is Citrate lyase acyl carrier protein.